A 67-amino-acid polypeptide reads, in one-letter code: Large ribosomal subunit protein bL32 (67 aa).

Residues 1–20 (MAVPKRKMSRSNTRARRAKW) show a composition bias toward basic residues. Residues 1 to 24 (MAVPKRKMSRSNTRARRAKWKATA) are disordered.

The protein belongs to the bacterial ribosomal protein bL32 family.

This Renibacterium salmoninarum (strain ATCC 33209 / DSM 20767 / JCM 11484 / NBRC 15589 / NCIMB 2235) protein is Large ribosomal subunit protein bL32.